Here is a 194-residue protein sequence, read N- to C-terminus: UPF0215 protein TV0037 (194 aa).

Belongs to the UPF0215 family.

This is UPF0215 protein TV0037 from Thermoplasma volcanium (strain ATCC 51530 / DSM 4299 / JCM 9571 / NBRC 15438 / GSS1).